We begin with the raw amino-acid sequence, 300 residues long: uncharacterized protein (300 aa).

S49 (charge relay system) is an active-site residue. The Proton donor role is filled by Y137. Residue K165 is the Schiff-base intermediate with substrate of the active site.

Belongs to the DapA family. Homotetramer.

The protein localises to the cytoplasm. Upon expression in E.coli complements a dapA deletion mutation, but this may not be its physiological function. This is an uncharacterized protein from Rhizobium meliloti (Ensifer meliloti).